The primary structure comprises 209 residues: ATP-dependent Clp protease proteolytic subunit (209 aa).

Ser103 acts as the Nucleophile in catalysis. His128 is an active-site residue.

This sequence belongs to the peptidase S14 family. As to quaternary structure, fourteen ClpP subunits assemble into 2 heptameric rings which stack back to back to give a disk-like structure with a central cavity, resembling the structure of eukaryotic proteasomes.

It is found in the cytoplasm. It catalyses the reaction Hydrolysis of proteins to small peptides in the presence of ATP and magnesium. alpha-casein is the usual test substrate. In the absence of ATP, only oligopeptides shorter than five residues are hydrolyzed (such as succinyl-Leu-Tyr-|-NHMec, and Leu-Tyr-Leu-|-Tyr-Trp, in which cleavage of the -Tyr-|-Leu- and -Tyr-|-Trp bonds also occurs).. Its function is as follows. Cleaves peptides in various proteins in a process that requires ATP hydrolysis. Has a chymotrypsin-like activity. Plays a major role in the degradation of misfolded proteins. This chain is ATP-dependent Clp protease proteolytic subunit, found in Lawsonia intracellularis (strain PHE/MN1-00).